A 207-amino-acid polypeptide reads, in one-letter code: Large ribosomal subunit protein uL4 (207 aa).

Residues 43–80 form a disordered region; it reads RRRSGTAKSKGRSEVSGSTRKLYRQKGTGNARSGSVKS. Residues 69 to 78 are compositionally biased toward polar residues; sequence GTGNARSGSV.

This sequence belongs to the universal ribosomal protein uL4 family. As to quaternary structure, part of the 50S ribosomal subunit.

One of the primary rRNA binding proteins, this protein initially binds near the 5'-end of the 23S rRNA. It is important during the early stages of 50S assembly. It makes multiple contacts with different domains of the 23S rRNA in the assembled 50S subunit and ribosome. Functionally, forms part of the polypeptide exit tunnel. The chain is Large ribosomal subunit protein uL4 from Desulforapulum autotrophicum (strain ATCC 43914 / DSM 3382 / VKM B-1955 / HRM2) (Desulfobacterium autotrophicum).